The following is a 202-amino-acid chain: UPF0301 protein ML0028 (202 aa).

It belongs to the UPF0301 (AlgH) family.

This is UPF0301 protein ML0028 from Mycobacterium leprae (strain TN).